A 99-amino-acid polypeptide reads, in one-letter code: uncharacterized protein (99 aa).

The chain crosses the membrane as a helical span at residues 76-96 (VLLGLASGMIGGIIGMFMWVL).

The protein resides in the host membrane. This is an uncharacterized protein from Haemophilus phage HP1 (strain HP1c1) (Bacteriophage HP1).